The sequence spans 706 residues: Paxillin-like protein 1 (706 aa).

Disordered stretches follow at residues 24-192 (ERAG…EQDL), 222-258 (VLDQ…LNFE), 279-341 (AKQE…TKVE), and 514-537 (IDNS…SSDA). Residues 35–64 (PFSSQRNASTGSLQASVKSPPITRQRNVSA) show a composition bias toward polar residues. Residues serine 43 and serine 63 each carry the phosphoserine modification. Composition is skewed to low complexity over residues 73-86 (KSAY…AYSS) and 117-129 (SSRP…SISR). 2 stretches are compositionally biased toward basic and acidic residues: residues 130-150 (PSER…DRQA) and 222-236 (VLDQ…KEES). Over residues 237–252 (SIEYESEGQQEDENDI) the composition is skewed to acidic residues. Basic and acidic residues predominate over residues 279–290 (AKQEEKNTEPKI). Residues 296–308 (TRESNTPSLTMNA) show a composition bias toward polar residues. 2 consecutive LIM zinc-binding domains span residues 556–612 (CRAC…CQKH) and 621–672 (CKVC…CGNH).

The protein is Paxillin-like protein 1 (PXL1) of Saccharomyces cerevisiae (strain ATCC 204508 / S288c) (Baker's yeast).